A 462-amino-acid chain; its full sequence is Glycine--tRNA ligase (462 aa).

R99 and E174 together coordinate substrate. ATP-binding positions include 206–208, 216–221, 290–291, and 334–337; these read RNE, FRTREF, EL, and GADR. Substrate is bound at residue 221 to 225; that stretch reads FEQME. 330-334 is a substrate binding site; sequence EPSLG.

The protein belongs to the class-II aminoacyl-tRNA synthetase family. As to quaternary structure, homodimer.

It is found in the cytoplasm. The catalysed reaction is tRNA(Gly) + glycine + ATP = glycyl-tRNA(Gly) + AMP + diphosphate. In terms of biological role, catalyzes the attachment of glycine to tRNA(Gly). This Macrococcus caseolyticus (strain JCSC5402) (Macrococcoides caseolyticum) protein is Glycine--tRNA ligase.